The primary structure comprises 107 residues: UPF0145 protein YbjQ (107 aa).

Belongs to the UPF0145 family.

The sequence is that of UPF0145 protein YbjQ from Salmonella gallinarum (strain 287/91 / NCTC 13346).